Consider the following 162-residue polypeptide: Transcription elongation factor GreA (162 aa).

Positions 45–74 form a coiled coil; sequence ENAEYEAAREKQAFIEGRIKELEDMTARAE.

Belongs to the GreA/GreB family.

Functionally, necessary for efficient RNA polymerase transcription elongation past template-encoded arresting sites. The arresting sites in DNA have the property of trapping a certain fraction of elongating RNA polymerases that pass through, resulting in locked ternary complexes. Cleavage of the nascent transcript by cleavage factors such as GreA or GreB allows the resumption of elongation from the new 3'terminus. GreA releases sequences of 2 to 3 nucleotides. This is Transcription elongation factor GreA from Rickettsia felis (strain ATCC VR-1525 / URRWXCal2) (Rickettsia azadi).